The following is a 170-amino-acid chain: Calcineurin subunit B type 1 (170 aa).

EF-hand domains are found at residues 18-46, 50-85, 87-122, and 128-163; these read DEIRRLGKRFRKLDLDNSGALSIDEFMSL, QQNPLVQRVIDIFDADGNGEVDFKEFIQGVSQFSVR, DKLSKLRFAFRIYDMDNDGYISNGELFQVLKMMVGN, and QLQQIVDKTICFADKDEDGKISFDEFCSVVGNTDIH. Aspartate 31, aspartate 33, serine 35, glutamate 42, aspartate 63, aspartate 65, asparagine 67, glutamate 69, glutamate 74, aspartate 100, aspartate 102, aspartate 104, tyrosine 106, glutamate 111, aspartate 141, aspartate 143, aspartate 145, lysine 147, and glutamate 152 together coordinate Ca(2+).

It belongs to the calcineurin regulatory subunit family. As to quaternary structure, composed of two components (A and B), the A component is the catalytic subunit and the B component confers calcium sensitivity.

Its function is as follows. Calcineurin is a calcium-binding and calmodulin-binding protein found in all cells from yeast to mammals, and a calcium-dependent, calmodulin-stimulated protein phosphatase. The chain is Calcineurin subunit B type 1 (CanB) from Drosophila melanogaster (Fruit fly).